A 71-amino-acid chain; its full sequence is Small ribosomal subunit protein bS21 (71 aa).

Residues 37 to 71 are disordered; that stretch reads HYEKPTQERKRKAAAAVKRHMKRLSREQARRRRLY. A compositionally biased stretch (basic residues) spans 45–71; it reads RKRKAAAAVKRHMKRLSREQARRRRLY.

The protein belongs to the bacterial ribosomal protein bS21 family.

The chain is Small ribosomal subunit protein bS21 from Alkalilimnicola ehrlichii (strain ATCC BAA-1101 / DSM 17681 / MLHE-1).